Reading from the N-terminus, the 221-residue chain is UPF0758 protein ECA0145 (221 aa).

The region spanning alanine 99–isoleucine 221 is the MPN domain. Residues histidine 170, histidine 172, and aspartate 183 each contribute to the Zn(2+) site. Residues histidine 170–aspartate 183 carry the JAMM motif motif.

The protein belongs to the UPF0758 family. YicR subfamily.

The sequence is that of UPF0758 protein ECA0145 from Pectobacterium atrosepticum (strain SCRI 1043 / ATCC BAA-672) (Erwinia carotovora subsp. atroseptica).